The chain runs to 190 residues: MSIILGIDPGSRVTGYGVIRQTGRHLEYLGSGAIRTQVEDLPTRLKRIYAGVTEIITQFQPNMFAIEQVFMAKNADSALKLGQARGTAIVAAVNNDLPVFEYAARLVKQTVVGIGSADKVQVQEMVTRILKLSDKPQADAADALAIAITHAHSIQHSLHIANSVKMTETQEKMTALLKTRYSRGRFRLKI.

Active-site residues include D8, E67, and D139. D8, E67, and D139 together coordinate Mg(2+).

Belongs to the RuvC family. Homodimer which binds Holliday junction (HJ) DNA. The HJ becomes 2-fold symmetrical on binding to RuvC with unstacked arms; it has a different conformation from HJ DNA in complex with RuvA. In the full resolvosome a probable DNA-RuvA(4)-RuvB(12)-RuvC(2) complex forms which resolves the HJ. It depends on Mg(2+) as a cofactor.

The protein localises to the cytoplasm. The catalysed reaction is Endonucleolytic cleavage at a junction such as a reciprocal single-stranded crossover between two homologous DNA duplexes (Holliday junction).. The RuvA-RuvB-RuvC complex processes Holliday junction (HJ) DNA during genetic recombination and DNA repair. Endonuclease that resolves HJ intermediates. Cleaves cruciform DNA by making single-stranded nicks across the HJ at symmetrical positions within the homologous arms, yielding a 5'-phosphate and a 3'-hydroxyl group; requires a central core of homology in the junction. The consensus cleavage sequence is 5'-(A/T)TT(C/G)-3'. Cleavage occurs on the 3'-side of the TT dinucleotide at the point of strand exchange. HJ branch migration catalyzed by RuvA-RuvB allows RuvC to scan DNA until it finds its consensus sequence, where it cleaves and resolves the cruciform DNA. The polypeptide is Crossover junction endodeoxyribonuclease RuvC (Haemophilus influenzae (strain 86-028NP)).